We begin with the raw amino-acid sequence, 209 residues long: Uracil phosphoribosyltransferase (209 aa).

5-phospho-alpha-D-ribose 1-diphosphate is bound by residues Arg-79, Arg-104, and 131–139 (DPMLATGGS). Uracil-binding positions include Ile-194 and 199 to 201 (GDA). A 5-phospho-alpha-D-ribose 1-diphosphate-binding site is contributed by Asp-200.

The protein belongs to the UPRTase family. Requires Mg(2+) as cofactor.

The catalysed reaction is UMP + diphosphate = 5-phospho-alpha-D-ribose 1-diphosphate + uracil. The protein operates within pyrimidine metabolism; UMP biosynthesis via salvage pathway; UMP from uracil: step 1/1. With respect to regulation, allosterically activated by GTP. In terms of biological role, catalyzes the conversion of uracil and 5-phospho-alpha-D-ribose 1-diphosphate (PRPP) to UMP and diphosphate. The polypeptide is Uracil phosphoribosyltransferase (Streptococcus mutans serotype c (strain ATCC 700610 / UA159)).